A 2319-amino-acid polypeptide reads, in one-letter code: A-kinase anchor protein 6 (2319 aa).

2 stretches are compositionally biased toward polar residues: residues 1–12 (MLTMSVTLSPLR) and 324–339 (GVSSSSGEALTNAAQP). Disordered regions lie at residues 1 to 24 (MLTMSVTLSPLRSQDLDPMATDAS), 301 to 369 (VDDK…NATP), 493 to 532 (SRLKKPHKTSEEVPPCRTPKRGTGSGKQAKNTKSSAVPNG), 566 to 614 (LQLQ…PSHV), and 691 to 757 (TRLG…SATK). The segment covering 340 to 351 (SSETVQQESSSS) has biased composition (low complexity). Polar residues-rich tracts occupy residues 518 to 532 (GKQAKNTKSSAVPNG) and 566 to 591 (LQLQSETSSSPAFTQSSESSVGSDNI). Low complexity predominate over residues 697–711 (SPSSSSDIASSLGES). Positions 735–754 (KYADEKSERASSSEKNESHS) are enriched in basic and acidic residues. Spectrin repeat units lie at residues 762 to 848 (QKLM…QLLE) and 1036 to 1150 (EKVD…LLDD). Position 1073 is a phosphoserine (S1073). Positions 1250-1272 (KLGETSNEDPGYDEEADNHGGSQ) are disordered. Acidic residues predominate over residues 1255-1265 (SNEDPGYDEEA). Residues S1570 and S1595 each carry the phosphoserine modification. 3 disordered regions span residues 1821–1842 (VSDEMKGSKDISSSEMTNPSDT), 1900–1925 (EGIPERQKGKPNVTSKVSENLGSHGK), and 1963–1983 (KCPNHHHFENQSTASTPTEKS). 3 stretches are compositionally biased toward polar residues: residues 1830–1842 (DISSSEMTNPSDT), 1911–1920 (NVTSKVSENL), and 1972–1982 (NQSTASTPTEK). The PKA-RII subunit binding domain stretch occupies residues 2063 to 2076 (IIDMASTALKSKSQ). The segment covering 2198–2215 (FSDSSLSADDADTVALSS) has biased composition (low complexity). Positions 2198–2319 (FSDSSLSADD…HEKRHRNMHR (122 aa)) are disordered.

As to quaternary structure, interacts with RII subunit of PKA, phosphatase 2B (calcineurin) and AKAP79. Interacts with SYNPO2. Highly expressed in cardiac and skeletal muscle, followed by brain.

The protein resides in the sarcoplasmic reticulum. It is found in the nucleus membrane. Its function is as follows. Binds to type II regulatory subunits of protein kinase A and anchors/targets them to the nuclear membrane or sarcoplasmic reticulum. May act as an adapter for assembling multiprotein complexes. This Homo sapiens (Human) protein is A-kinase anchor protein 6 (AKAP6).